We begin with the raw amino-acid sequence, 870 residues long: Translation initiation factor IF-2 (870 aa).

Residues 49 to 284 (SFQNSAPAEK…TKRKERPLPE (236 aa)) form a disordered region. Basic and acidic residues-rich tracts occupy residues 70 to 81 (RKNEKKQEDNAG) and 94 to 109 (QNND…RDHS). The segment covering 116-127 (KPKAAALLQQFK) has biased composition (low complexity). Basic and acidic residues-rich tracts occupy residues 144–159 (AKKE…KKEQ) and 168–183 (NKES…EKKV). The span at 254 to 279 (RKRRKNKNKKRKQEQKPKKQITKRKE) shows a compositional bias: basic residues. A tr-type G domain is found at 371 to 540 (KRPPVVTIMG…LLQADMMELK (170 aa)). The segment at 380–387 (GHVDHGKT) is G1. A GTP-binding site is contributed by 380 to 387 (GHVDHGKT). A G2 region spans residues 405-409 (GITQK). A G3 region spans residues 426–429 (DTPG). GTP is bound by residues 426–430 (DTPGH) and 480–483 (NKMD). The interval 480–483 (NKMD) is G4. The tract at residues 516–518 (SAR) is G5.

The protein belongs to the TRAFAC class translation factor GTPase superfamily. Classic translation factor GTPase family. IF-2 subfamily.

It localises to the cytoplasm. One of the essential components for the initiation of protein synthesis. Protects formylmethionyl-tRNA from spontaneous hydrolysis and promotes its binding to the 30S ribosomal subunits. Also involved in the hydrolysis of GTP during the formation of the 70S ribosomal complex. The chain is Translation initiation factor IF-2 from Lactobacillus helveticus (strain DPC 4571).